Consider the following 86-residue polypeptide: Toxin Td2 (86 aa).

Positions 1 to 20 are cleaved as a signal peptide; sequence MTRFVLFLNCFFLICMVVEC. In terms of domain architecture, LCN-type CS-alpha/beta spans 21-83; that stretch reads KEGYLMGADG…TWDRATNTCG (63 aa). 4 disulfides stabilise this stretch: cysteine 31–cysteine 82, cysteine 35–cysteine 57, cysteine 43–cysteine 63, and cysteine 47–cysteine 65. Arginine 84 carries the post-translational modification Arginine amide.

Expressed by the venom gland.

Its subcellular location is the secreted. Its function is as follows. Beta toxins bind voltage-independently at site-4 of sodium channels (Nav) and shift the voltage of activation toward more negative potentials thereby affecting sodium channel activation and promoting spontaneous and repetitive firing. The polypeptide is Toxin Td2 (Tityus discrepans (Venezuelan scorpion)).